The primary structure comprises 393 residues: N-acyl-phosphatidylethanolamine-hydrolyzing phospholipase D (393 aa).

An N-acetylmethionine modification is found at Met1. Residues 1–16 are compositionally biased toward polar residues; it reads MDENESNQSLMTSSQY. The segment at 1–40 is disordered; the sequence is MDENESNQSLMTSSQYPKEAVRKRQNSARNSGASDSSRFS. Positions 185 and 187 each coordinate Zn(2+). Tyr188 contributes to the an N-acyl-1,2-diacyl-sn-glycero-3-phosphoethanolamine binding site. 3 residues coordinate Zn(2+): Asp189, His190, and His253. Deoxycholate-binding residues include Lys256 and Met260. Asp284 lines the Zn(2+) pocket. Residue His321 participates in an N-acyl-1,2-diacyl-sn-glycero-3-phosphoethanolamine binding. His343 contacts Zn(2+). Ala348 is a deoxycholate binding site.

It belongs to the NAPE-PLD family. Homodimer. Bile acids promote the assembly of inactive monomers into an active dimer and enable catalysis. Zn(2+) is required as a cofactor. In terms of tissue distribution, widely expressed. Highest expression in brain, kidney and testis (at protein level). Expressed in adipose tissue (at protein level).

The protein localises to the golgi apparatus membrane. It is found in the early endosome membrane. It localises to the nucleus envelope. The protein resides in the nucleus. Its subcellular location is the nucleoplasm. The catalysed reaction is an N-acyl-1,2-diacyl-sn-glycero-3-phosphoethanolamine + H2O = an N-acylethanolamine + a 1,2-diacyl-sn-glycero-3-phosphate + H(+). It carries out the reaction N-butanoyl-1-hexadecanoyl-2-(9Z,12Z-octadecadienoyl)-sn-glycero-3-phosphoethanolamine + H2O = N-butanoyl ethanolamine + 1-hexadecanoyl-2-(9Z,12Z-octadecadienoyl)-sn-glycero-3-phosphate + H(+). It catalyses the reaction N-hexanoyl-1-hexadecanoyl-2-(9Z,12Z-octadecadienoyl)-sn-glycero-3-phosphoethanolamine + H2O = N-hexanoyl ethanolamine + 1-hexadecanoyl-2-(9Z,12Z-octadecadienoyl)-sn-glycero-3-phosphate + H(+). The enzyme catalyses N-octanoyl-1-hexadecanoyl-2-(9Z,12Z-octadecadienoyl)-sn-glycero-3-phosphoethanolamine + H2O = N-octanoyl ethanolamine + 1-hexadecanoyl-2-(9Z,12Z-octadecadienoyl)-sn-glycero-3-phosphate + H(+). The catalysed reaction is N-decanoyl-1-hexadecanoyl-2-(9Z,12Z-octadecadienoyl)-sn-glycero-3-phosphoethanolamine + H2O = N-decanoyl ethanolamine + 1-hexadecanoyl-2-(9Z,12Z-octadecadienoyl)-sn-glycero-3-phosphate + H(+). It carries out the reaction N-dodecanoyl-1,2-di-(9Z-octadecenoyl)-sn-glycero-3-phosphoethanolamine + H2O = N-dodecanoylethanolamine + 1,2-di-(9Z-octadecenoyl)-sn-glycero-3-phosphate + H(+). It catalyses the reaction N-tetradecanoyl-1,2-di-(9Z-octadecenoyl)-sn-glycero-3-phosphoethanolamine + H2O = N-tetradecanoylethanolamine + 1,2-di-(9Z-octadecenoyl)-sn-glycero-3-phosphate + H(+). The enzyme catalyses N-hexadecanoyl-1,2-di-(9Z-octadecenoyl)-sn-glycero-3-phosphoethanolamine + H2O = N-hexadecanoylethanolamine + 1,2-di-(9Z-octadecenoyl)-sn-glycero-3-phosphate + H(+). The catalysed reaction is N,1-dihexadecanoyl-2-(9Z,12Z-octadecadienoyl)-sn-glycero-3-phosphoethanolamine + H2O = 1-hexadecanoyl-2-(9Z,12Z-octadecadienoyl)-sn-glycero-3-phosphate + N-hexadecanoylethanolamine + H(+). It carries out the reaction N-octadecanoyl-1,2-di-(9Z-octadecenoyl)-sn-glycero-3-phosphoethanolamine + H2O = N-octadecanoyl ethanolamine + 1,2-di-(9Z-octadecenoyl)-sn-glycero-3-phosphate + H(+). It catalyses the reaction N,1,2-tri-(9Z-octadecenoyl)-sn-glycero-3-phosphoethanolamine + H2O = N-(9Z-octadecenoyl) ethanolamine + 1,2-di-(9Z-octadecenoyl)-sn-glycero-3-phosphate + H(+). The enzyme catalyses N-(5Z,8Z,11Z,14Z-eicosatetraenoyl)-1,2-diacyl-sn-glycero-3-phosphoethanolamine + H2O = N-(5Z,8Z,11Z,14Z-eicosatetraenoyl)-ethanolamine + a 1,2-diacyl-sn-glycero-3-phosphate + H(+). The catalysed reaction is N-(5Z,8Z,11Z,14Z-eicosatetraenoyl)-1,2-di-(9Z-octadecenoyl)-sn-glycero-3-phosphoethanolamine + H2O = N-(5Z,8Z,11Z,14Z-eicosatetraenoyl)-ethanolamine + 1,2-di-(9Z-octadecenoyl)-sn-glycero-3-phosphate + H(+). It carries out the reaction 1-O-(1Z-octadecenoyl)-2-(9Z-octadecenoyl)-sn-glycero-3-phospho-N-hexadecanoyl-ethanolamine + H2O = 1-O-(1Z-octadecenoyl)-2-(9Z-octadecenoyl)-sn-glycero-3-phosphate + N-hexadecanoylethanolamine + H(+). It catalyses the reaction N,1-diacyl-sn-glycero-3-phosphoethanolamine + H2O = an N-acylethanolamine + a 1-acyl-sn-glycero-3-phosphate + H(+). The enzyme catalyses N,1-dihexadecanoyl-sn-glycero-3-phosphoethanolamine + H2O = N-hexadecanoylethanolamine + 1-hexadecanoyl-sn-glycero-3-phosphate + H(+). The catalysed reaction is N-(5Z,8Z,11Z,14Z-eicosatetraenoyl)-1-(9Z-octadecenoyl)-sn-glycero-3-phosphoethanolamine + H2O = N-(5Z,8Z,11Z,14Z-eicosatetraenoyl)-ethanolamine + 1-(9Z-octadecenoyl)-sn-glycero-3-phosphate + H(+). Its activity is regulated as follows. Activated by divalent cations. Activated by bile acids and their conjugates, except for lithocholic acid which is rather inhibitory. Binding of deoxycholic acid favors the selective release of anandamide and likely other unsatured long FAEs. Inhibited by phosphatidylethanolamines. In terms of biological role, D-type phospholipase that hydrolyzes N-acyl-phosphatidylethanolamines (NAPEs) to produce bioactive N-acylethanolamines/fatty acid ethanolamides (NAEs/FAEs) and phosphatidic acid. Cleaves the terminal phosphodiester bond of diacyl- and alkenylacyl-NAPEs, primarily playing a role in the generation of long-chain saturated and monounsaturated NAEs in the brain. May control NAPE homeostasis in dopaminergic neuron membranes and regulate neuron survival, partly through RAC1 activation. As a regulator of lipid metabolism in the adipose tissue, mediates the crosstalk between adipocytes, gut microbiota and immune cells to control body temperature and weight. In particular, regulates energy homeostasis by promoting cold-induced brown or beige adipocyte differentiation program to generate heat from fatty acids and glucose. Has limited D-type phospholipase activity toward N-acyl lyso-NAPEs. This chain is N-acyl-phosphatidylethanolamine-hydrolyzing phospholipase D (NAPEPLD), found in Homo sapiens (Human).